The sequence spans 240 residues: tRNA (guanine-N(1)-)-methyltransferase (240 aa).

S-adenosyl-L-methionine is bound by residues Gly-110 and 129-134; that span reads LGDFVL.

It belongs to the RNA methyltransferase TrmD family. Homodimer.

Its subcellular location is the cytoplasm. It carries out the reaction guanosine(37) in tRNA + S-adenosyl-L-methionine = N(1)-methylguanosine(37) in tRNA + S-adenosyl-L-homocysteine + H(+). Its function is as follows. Specifically methylates guanosine-37 in various tRNAs. In Clostridium botulinum (strain Kyoto / Type A2), this protein is tRNA (guanine-N(1)-)-methyltransferase.